A 113-amino-acid chain; its full sequence is Putative increased recombination centers protein 14 (113 aa).

The sequence is that of Putative increased recombination centers protein 14 (IRC14) from Saccharomyces cerevisiae (strain ATCC 204508 / S288c) (Baker's yeast).